Reading from the N-terminus, the 150-residue chain is UPF0756 membrane protein ACICU_02320 (150 aa).

The next 4 membrane-spanning stretches (helical) occupy residues 1–21 (MLAQ…CGLL), 45–65 (FFPY…TIGV), 83–103 (FISF…WLGG), and 115–135 (VVAG…GVPV).

The protein belongs to the UPF0756 family.

The protein localises to the cell membrane. This Acinetobacter baumannii (strain ACICU) protein is UPF0756 membrane protein ACICU_02320.